A 382-amino-acid chain; its full sequence is Lipid-A-disaccharide synthase (382 aa).

It belongs to the LpxB family.

The catalysed reaction is 2-N,3-O-bis[(3R)-3-hydroxytetradecanoyl]-alpha-D-glucosaminyl 1-phosphate + UDP-2-N,3-O-bis[(3R)-3-hydroxytetradecanoyl]-alpha-D-glucosamine = lipid A disaccharide (E. coli) + UDP + H(+). It catalyses the reaction a lipid X + a UDP-2-N,3-O-bis[(3R)-3-hydroxyacyl]-alpha-D-glucosamine = a lipid A disaccharide + UDP + H(+). It functions in the pathway glycolipid biosynthesis; lipid IV(A) biosynthesis; lipid IV(A) from (3R)-3-hydroxytetradecanoyl-[acyl-carrier-protein] and UDP-N-acetyl-alpha-D-glucosamine: step 5/6. Its function is as follows. Condensation of UDP-2,3-diacylglucosamine and 2,3-diacylglucosamine-1-phosphate to form lipid A disaccharide, a precursor of lipid A, a phosphorylated glycolipid that anchors the lipopolysaccharide to the outer membrane of the cell. This is Lipid-A-disaccharide synthase from Salmonella typhimurium (strain LT2 / SGSC1412 / ATCC 700720).